The chain runs to 541 residues: Protein wntless homolog (541 aa).

The Cytoplasmic portion of the chain corresponds to methionine 1 to cysteine 15. The helical transmembrane segment at isoleucine 16–alanine 36 threads the bilayer. Residues proline 37–lysine 232 lie on the Lumenal side of the membrane. The segment at methionine 101–lysine 232 is interaction with Wnt proteins. Residues valine 233–tryptophan 253 form a helical membrane-spanning segment. Residues arginine 254–lysine 268 are Cytoplasmic-facing. A helical membrane pass occupies residues valine 269–isoleucine 289. Residues glycine 290–arginine 303 are Lumenal-facing. The chain crosses the membrane as a helical span at residues glutamine 304–methionine 324. The Cytoplasmic portion of the chain corresponds to aspartate 325–histidine 331. Residues isoleucine 332–phenylalanine 352 form a helical membrane-spanning segment. Residues aspartate 353–alanine 380 lie on the Lumenal side of the membrane. Residues phenylalanine 381–phenylalanine 401 traverse the membrane as a helical segment. Topologically, residues glutamine 402–arginine 431 are cytoplasmic. Residues phenylalanine 432–valine 452 form a helical membrane-spanning segment. Over serine 453–serine 471 the chain is Lumenal. A helical membrane pass occupies residues alanine 472–tyrosine 492. At alanine 493–glutamate 541 the chain is on the cytoplasmic side.

It belongs to the wntless family. Interacts with WNT3A. Interacts with WNT1, WNT3 and WNT5. Post-translationally, N-glycosylated. In terms of tissue distribution, expressed in the brain, skeletal muscle, heart muscle, lung, gut, liver, and kidney (at protein level). In the brain, expressed in the cortex, striatum, hippocampus and to a lesser extent in the cerebellum (at protein level). Expressed in kidney, lung, skin, intestine, brain, spinal cord, skeleton, eyes, excretion glands, tooth and palatal shelves. In the cerebellum, expressed in Purkinje cells.

It localises to the golgi apparatus membrane. The protein resides in the cytoplasmic vesicle membrane. Its subcellular location is the cell membrane. It is found in the endoplasmic reticulum membrane. The protein localises to the early endosome membrane. Functionally, regulates Wnt proteins sorting and secretion in a feedback regulatory mechanism. This reciprocal interaction plays a key role in the regulation of expression, subcellular location, binding and organelle-specific association of Wnt proteins. Also plays an important role in establishment of the anterior-posterior body axis formation during development. This chain is Protein wntless homolog (Wls), found in Mus musculus (Mouse).